Reading from the N-terminus, the 316-residue chain is Putative HTH-type transcriptional regulatory protein PYRAB03670 (316 aa).

The region spanning 131-189 (LKDLREKHGYSLSELANILGVSRKSLQRYEKGDSMVTLEVALRLEEVFDEALVKPINVL) is the HTH cro/C1-type domain. A DNA-binding region (H-T-H motif) is located at residues 142 to 161 (LSELANILGVSRKSLQRYEK).

The chain is Putative HTH-type transcriptional regulatory protein PYRAB03670 from Pyrococcus abyssi (strain GE5 / Orsay).